The chain runs to 380 residues: Cytochrome b (380 aa).

Helical transmembrane passes span 34-54, 78-99, 114-134, and 179-199; these read FGSLLGICLMTQILTGLLLAM, WLIRNLHANGASLFFICIYLHI, WNTGIILLLTLMATAFVGYVL, and FFALHFLLPFLIAGLTLIHLT. The heme b site is built by H84 and H98. 2 residues coordinate heme b: H183 and H197. H202 is a binding site for a ubiquinone. Helical transmembrane passes span 227 to 247, 289 to 309, 321 to 341, and 348 to 368; these read SKDILGFMLLYFLLTTLALLS, LGGVLALAASILILFLSPFLH, LSQALFWLLVTNLFILTWIGS, and FIIIGQLASLSYFTILLILLP.

Belongs to the cytochrome b family. As to quaternary structure, the cytochrome bc1 complex contains 11 subunits: 3 respiratory subunits (MT-CYB, CYC1 and UQCRFS1), 2 core proteins (UQCRC1 and UQCRC2) and 6 low-molecular weight proteins (UQCRH/QCR6, UQCRB/QCR7, UQCRQ/QCR8, UQCR10/QCR9, UQCR11/QCR10 and a cleavage product of UQCRFS1). This cytochrome bc1 complex then forms a dimer. The cofactor is heme b.

The protein localises to the mitochondrion inner membrane. In terms of biological role, component of the ubiquinol-cytochrome c reductase complex (complex III or cytochrome b-c1 complex) that is part of the mitochondrial respiratory chain. The b-c1 complex mediates electron transfer from ubiquinol to cytochrome c. Contributes to the generation of a proton gradient across the mitochondrial membrane that is then used for ATP synthesis. This Phalcoboenus australis (Striated caracara) protein is Cytochrome b (MT-CYB).